We begin with the raw amino-acid sequence, 899 residues long: AP-3 complex subunit delta (899 aa).

HEAT repeat units follow at residues 37–74, 155–192, 194–229, 231–267, 268–305, 308–344, 345–382, 384–428, 480–518, 536–580, 590–613, and 614–656; these read QSPE…KLTY, ELAR…QYPE, LRDN…HNPQ, FIQL…IEPK, LRVK…LNSD, DSAV…KINT, DFIA…EDNL, DFVQ…ITAM, RTLA…LLDN, ELQQ…LIIS, SEAL…SLPL, and LLTE…TESE. Disordered stretches follow at residues 668 to 701, 741 to 768, 782 to 801, and 849 to 899; these read DGIV…PTHE, NLSN…KKKK, GVNT…SARN, and AAEE…LTTE. Residues 743-759 show a composition bias toward low complexity; the sequence is SNSKPSSSGSLVRLSSE. A coiled-coil region spans residues 841 to 862; it reads QRLLDESAAAEEEVVVVKKKKR. The span at 857–880 shows a compositional bias: basic residues; sequence VKKKKRSKDGSKSSKKKSRSKSKP.

It belongs to the adaptor complexes large subunit family. Adaptor protein complex 3 (AP-3) is a heterotetramer composed of 2 large adaptins (APL5 and APL6), a medium adaptin (APM3) and a small adaptin (APS3).

Its subcellular location is the golgi apparatus. The protein localises to the cytoplasmic vesicle. It is found in the clathrin-coated vesicle membrane. Part of the AP-3 complex, an adaptor-related complex which is not clathrin-associated. The complex is associated with the Golgi region as well as more peripheral structures. It facilitates the budding of vesicles from the Golgi membrane and may be directly involved in trafficking to the vacuole. The polypeptide is AP-3 complex subunit delta (APL5) (Eremothecium gossypii (strain ATCC 10895 / CBS 109.51 / FGSC 9923 / NRRL Y-1056) (Yeast)).